The primary structure comprises 187 residues: Elongation factor P (187 aa).

The protein belongs to the elongation factor P family.

It localises to the cytoplasm. Its pathway is protein biosynthesis; polypeptide chain elongation. Involved in peptide bond synthesis. Stimulates efficient translation and peptide-bond synthesis on native or reconstituted 70S ribosomes in vitro. Probably functions indirectly by altering the affinity of the ribosome for aminoacyl-tRNA, thus increasing their reactivity as acceptors for peptidyl transferase. This is Elongation factor P from Mycolicibacterium gilvum (strain PYR-GCK) (Mycobacterium gilvum (strain PYR-GCK)).